Consider the following 689-residue polypeptide: Glycine--tRNA ligase beta subunit (689 aa).

It belongs to the class-II aminoacyl-tRNA synthetase family. Tetramer of two alpha and two beta subunits.

It localises to the cytoplasm. The enzyme catalyses tRNA(Gly) + glycine + ATP = glycyl-tRNA(Gly) + AMP + diphosphate. This is Glycine--tRNA ligase beta subunit from Salmonella choleraesuis (strain SC-B67).